The primary structure comprises 119 residues: Phosphoribosyl-AMP cyclohydrolase (119 aa).

Position 71 (Asp71) interacts with Mg(2+). Residue Cys72 coordinates Zn(2+). Mg(2+) contacts are provided by Asp73 and Asp75. Positions 90 and 97 each coordinate Zn(2+).

Belongs to the PRA-CH family. As to quaternary structure, homodimer. It depends on Mg(2+) as a cofactor. Zn(2+) serves as cofactor.

The protein resides in the cytoplasm. It catalyses the reaction 1-(5-phospho-beta-D-ribosyl)-5'-AMP + H2O = 1-(5-phospho-beta-D-ribosyl)-5-[(5-phospho-beta-D-ribosylamino)methylideneamino]imidazole-4-carboxamide. The protein operates within amino-acid biosynthesis; L-histidine biosynthesis; L-histidine from 5-phospho-alpha-D-ribose 1-diphosphate: step 3/9. Its function is as follows. Catalyzes the hydrolysis of the adenine ring of phosphoribosyl-AMP. In Brucella abortus (strain 2308), this protein is Phosphoribosyl-AMP cyclohydrolase.